Consider the following 346-residue polypeptide: Hydroxymethylglutaryl-CoA synthase (346 aa).

Residue aspartate 28 participates in (3S)-3-hydroxy-3-methylglutaryl-CoA binding. Catalysis depends on glutamate 80, which acts as the Proton donor/acceptor. (3S)-3-hydroxy-3-methylglutaryl-CoA contacts are provided by cysteine 112 and threonine 153. Cysteine 112 acts as the Acyl-thioester intermediate in catalysis. Arginine 199 contacts CoA. Residues threonine 201 and histidine 234 each coordinate (3S)-3-hydroxy-3-methylglutaryl-CoA. Catalysis depends on histidine 234, which acts as the Proton donor/acceptor. Lysine 239 contacts CoA. Lysine 243, asparagine 266, and serine 296 together coordinate (3S)-3-hydroxy-3-methylglutaryl-CoA.

This sequence belongs to the thiolase-like superfamily. Archaeal HMG-CoA synthase family. As to quaternary structure, interacts with acetoacetyl-CoA thiolase that catalyzes the precedent step in the pathway and with a DUF35 protein. The acetoacetyl-CoA thiolase/HMG-CoA synthase complex channels the intermediate via a fused CoA-binding site, which allows for efficient coupling of the endergonic thiolase reaction with the exergonic HMGCS reaction.

The enzyme catalyses acetoacetyl-CoA + acetyl-CoA + H2O = (3S)-3-hydroxy-3-methylglutaryl-CoA + CoA + H(+). It participates in metabolic intermediate biosynthesis; (R)-mevalonate biosynthesis; (R)-mevalonate from acetyl-CoA: step 2/3. Functionally, catalyzes the condensation of acetyl-CoA with acetoacetyl-CoA to form 3-hydroxy-3-methylglutaryl-CoA (HMG-CoA). Functions in the mevalonate (MVA) pathway leading to isopentenyl diphosphate (IPP), a key precursor for the biosynthesis of isoprenoid compounds that are building blocks of archaeal membrane lipids. This chain is Hydroxymethylglutaryl-CoA synthase, found in Methanothermobacter thermautotrophicus (strain ATCC 29096 / DSM 1053 / JCM 10044 / NBRC 100330 / Delta H) (Methanobacterium thermoautotrophicum).